The sequence spans 149 residues: MSDLSAQKRLAADVLDVGENRVWFDPDAQSEIADAITREDIRELVADGTIDAEDTQGNSRGRARERDAKESYGHKKGAGSRKGKAGARQNEKREYVAGIRAQRQQLRELRDDGTLSPAQYREMYNMANGGEFDSVRRLTNYVEENYGDS.

The interval 45–94 (VADGTIDAEDTQGNSRGRARERDAKESYGHKKGAGSRKGKAGARQNEKRE) is disordered. Residues 62–73 (RARERDAKESYG) show a composition bias toward basic and acidic residues. Basic residues predominate over residues 74 to 85 (HKKGAGSRKGKA).

It belongs to the eukaryotic ribosomal protein eL19 family. In terms of assembly, part of the 50S ribosomal subunit.

Its function is as follows. Binds to the 23S rRNA. The chain is Large ribosomal subunit protein eL19 from Halobacterium salinarum (strain ATCC 700922 / JCM 11081 / NRC-1) (Halobacterium halobium).